Here is a 294-residue protein sequence, read N- to C-terminus: MTSSESEIQARLLAQALPFMQKYENKTIVVKYGGHAMGDSTLGKAFAEDIALLKQSGINPIVVHGGGPQIGAMLSKMGIESKFEGGLRVTDAKTVEIVEMVLAGSINKEIVALINQTGEWAIGLCGKDGNMVFAEKAKKTVIDPDSNIERVLDLGFVGEVVEVDRTLLDLLAKSEMIPVIAPVAPGRDGATYNINADTFAGAIAGALHATRLLFLTDVPGVLDKNKELIKELTVSEARALIKDGTISGGMIPKVETCIDAIKAGVQGVVILNGKTPHSVLLEIFTEGAGTLIVP.

Residues 66–67 (GG), Arg-88, and Asn-193 contribute to the substrate site.

This sequence belongs to the acetylglutamate kinase family. ArgB subfamily.

Its subcellular location is the cytoplasm. It carries out the reaction N-acetyl-L-glutamate + ATP = N-acetyl-L-glutamyl 5-phosphate + ADP. The protein operates within amino-acid biosynthesis; L-arginine biosynthesis; N(2)-acetyl-L-ornithine from L-glutamate: step 2/4. Functionally, catalyzes the ATP-dependent phosphorylation of N-acetyl-L-glutamate. This chain is Acetylglutamate kinase, found in Agrobacterium fabrum (strain C58 / ATCC 33970) (Agrobacterium tumefaciens (strain C58)).